We begin with the raw amino-acid sequence, 94 residues long: Gene 4.5 protein (94 aa).

The protein is Gene 4.5 protein (4.5) of Enterobacteria phage T3 (Bacteriophage T3).